The chain runs to 366 residues: NADP-dependent isopropanol dehydrogenase (366 aa).

The Zn(2+) site is built by Cys-43, His-65, Glu-66, and Asp-156. NADP(+)-binding positions include 181-184 (IGPV), 204-206 (GSR), Tyr-224, 271-273 (VNY), and Lys-346.

Belongs to the zinc-containing alcohol dehydrogenase family. As to quaternary structure, homodimer. Requires Zn(2+) as cofactor.

It is found in the cytoplasm. The enzyme catalyses propan-2-ol + NADP(+) = acetone + NADPH + H(+). Alcohol dehydrogenase with a preference for medium chain secondary alcohols, such as 2-butanol and isopropanol. Has very low activity with primary alcohols, such as ethanol. Under physiological conditions, the enzyme reduces aldehydes and 2-ketones to produce secondary alcohols. Is also active with acetaldehyde and propionaldehyde. The sequence is that of NADP-dependent isopropanol dehydrogenase from Entamoeba histolytica (strain ATCC 30459 / HM-1:IMSS / ABRM).